A 469-amino-acid polypeptide reads, in one-letter code: MTNLTLMNQLTPKQIVEKLDQYIIGQTGAKKSVAVALRNRYRRQLMDESIRDEIIPKNILMIGPTGVGKTEIARRIAKIVRAPFSKVEATKFTEVGYVGRDVESMVRDLVEVSVRLVKEEKMQLVRVKAEKNAEKRLIKLLAPSQKKKQTTSQNPLEALFGSMNQPDEPAEEEVDQELKNKRSQIEWRLQNGELDDEIVTVEVKEQQNPMFDMMRGTGMDQMSGMQDALSGMFPAKKKKRKVTVREAKKILFEDEASKLIDSDELAAEGIHRAEQMGMIFIDEIDKIASKEGGGNAQVSREGVQRDILPIVEGSQISTKYGTVNTEYILFIAAGAFHMSKPSDLIPELQGRFPIRIELDKLTQEDFYKILTEPDNALIKQYKALLKTEGIDLIFTKEAVERIAEIAFQVNQDSDNIGARRLHTILEKLLEDLLFEAPEINMESIKVTENYVNEKLAPIMTNKDLTQFIL.

ATP is bound by residues isoleucine 24 and 66-71; that span reads GVGKTE. The tract at residues 159–179 is disordered; sequence LFGSMNQPDEPAEEEVDQELK. ATP-binding residues include aspartate 282, glutamate 347, and arginine 419.

The protein belongs to the ClpX chaperone family. HslU subfamily. In terms of assembly, a double ring-shaped homohexamer of HslV is capped on each side by a ring-shaped HslU homohexamer. The assembly of the HslU/HslV complex is dependent on binding of ATP.

It is found in the cytoplasm. In terms of biological role, ATPase subunit of a proteasome-like degradation complex; this subunit has chaperone activity. The binding of ATP and its subsequent hydrolysis by HslU are essential for unfolding of protein substrates subsequently hydrolyzed by HslV. HslU recognizes the N-terminal part of its protein substrates and unfolds these before they are guided to HslV for hydrolysis. In Listeria innocua serovar 6a (strain ATCC BAA-680 / CLIP 11262), this protein is ATP-dependent protease ATPase subunit HslU.